Here is a 365-residue protein sequence, read N- to C-terminus: Histidinol-phosphate aminotransferase 2 (365 aa).

Lys-222 is subject to N6-(pyridoxal phosphate)lysine.

It belongs to the class-II pyridoxal-phosphate-dependent aminotransferase family. Histidinol-phosphate aminotransferase subfamily. Homodimer. Pyridoxal 5'-phosphate is required as a cofactor.

The enzyme catalyses L-histidinol phosphate + 2-oxoglutarate = 3-(imidazol-4-yl)-2-oxopropyl phosphate + L-glutamate. The protein operates within amino-acid biosynthesis; L-histidine biosynthesis; L-histidine from 5-phospho-alpha-D-ribose 1-diphosphate: step 7/9. In Bordetella parapertussis (strain 12822 / ATCC BAA-587 / NCTC 13253), this protein is Histidinol-phosphate aminotransferase 2 (hisC2).